The primary structure comprises 2080 residues: Fatty acid synthase beta subunit TOXC (2080 aa).

The Starter acyltransferase (SAT) domain maps to 170–397 (GRYFDELREL…LYRFNLLLRK (228 aa)). Residue Ser-276 is the For acetyltransferase activity of the active site. The tract at residues 585-830 (SRLLGLPPIM…VIVETEGLND (246 aa)) is enoyl reductase (ER) domain. The segment at 1155–1644 (GKSRSWRHAI…LPNQKLEVKL (490 aa)) is dehydratase (DH) domain. The 119-residue stretch at 1544–1662 (SVDFEDPVSV…MIRLHIEARA (119 aa)) folds into the MaoC-like domain. Residues 1682 to 2046 (TYVFTGQGSQ…FQYVYDLTGS (365 aa)) enclose the Malonyl-CoA:ACP transacylase (MAT) domain. The interval 1683–2046 (YVFTGQGSQE…FQYVYDLTGS (364 aa)) is malonyl/palmitoyl transferase (MT/PT) domain. The active-site For malonyltransferase activity is the Ser-1828.

Belongs to the fungal fatty acid synthetase subunit beta family.

The catalysed reaction is acetyl-CoA + n malonyl-CoA + 2n NADPH + 4n H(+) = a long-chain-acyl-CoA + n CoA + n CO2 + 2n NADP(+).. It catalyses the reaction holo-[ACP] + acetyl-CoA = acetyl-[ACP] + CoA. It carries out the reaction holo-[ACP] + malonyl-CoA = malonyl-[ACP] + CoA. The enzyme catalyses a (3R)-hydroxyacyl-[ACP] = a (2E)-enoyl-[ACP] + H2O. The catalysed reaction is a 2,3-saturated acyl-[ACP] + NAD(+) = a (2E)-enoyl-[ACP] + NADH + H(+). It catalyses the reaction (9Z)-octadecenoyl-[ACP] + H2O = (9Z)-octadecenoate + holo-[ACP] + H(+). It functions in the pathway mycotoxin biosynthesis; HC-toxin biosynthesis. Its function is as follows. Fatty acid synthase beta subunit, part of the diffuse TOX2 gene cluster that mediates the biosynthesis of the HC-toxin, cyclic tetrapeptide of structure cyclo(D-Pro-L-Ala-D-Ala-L-Aeo), where Aeo stands for 2-amino-9,10-epoxi-8-oxodecanoic acid. HC-toxin is a determinant of specificity and virulence in the interaction between the producing fungus and its host, maize. TOXC contribute to the synthesis of the decanoic backbone of 2-amino-9,10-epoxi-8-oxodecanoic acid, an essential precursor for the production of the major forms of HC-toxin by the non-ribosomal peptide synthetase HTS1. This Cochliobolus carbonum (Maize leaf spot fungus) protein is Fatty acid synthase beta subunit TOXC.